An 865-amino-acid chain; its full sequence is Leucine--tRNA ligase (865 aa).

The 'HIGH' region signature appears at Pro-41–His-51. The 'KMSKS' region signature appears at Lys-614–Ser-618. Lys-617 is an ATP binding site.

It belongs to the class-I aminoacyl-tRNA synthetase family.

It is found in the cytoplasm. The catalysed reaction is tRNA(Leu) + L-leucine + ATP = L-leucyl-tRNA(Leu) + AMP + diphosphate. The sequence is that of Leucine--tRNA ligase from Rhodospirillum centenum (strain ATCC 51521 / SW).